The chain runs to 591 residues: MFGIQDSIQRSGSSMKEEPIGAGMNAVRTWMQGAGVLDANTAAQSGVGLARAHFEKQPPSNLRKSNFFHFVLALYDRQGQPVEIERTSFVGFVEKEKESTGEKTNNGIHYRLQLLYSNGIRTEQDFYVRLIDSMTKQAIIYEGQDKNPEMCRVLLTHEIMCSRCCDKKSCGNRNETPSDPVIIDRFFLKFFLKCNQNCLKNAGNPRDMRRFQVVVSTTVSVDGHVLAVSDNMFVHNNSKHGRRARRLDPSEGTPSYLEHATPCIKAISPSEGWTTGGATVIIIGDNFFDGLQVIFGTMLVWSELITPHAIRVQTPPRHIPGVVEVTLSYKSKQFCKGTPGRFIYTALNEPTIDYGFQRLQKVIPRHPGDPERLPKEVILKRAADLVEALYGMPHNNQEIILKRAADIAEALYNVPRGHNQLPGLTNSSVHSGMMGVNSFHSQLAVNVSDSTQAANQGFSRNTSSVSPHGYVPSTTPQQSSYSTVSTSMNGYGNAGMTTLGGSPNFLNGSAANSPYAIVPSSPTMASSTSLPSNCSSSSGIFSFSPANMVSAVKQKSAFAPVVRPQASPPPTCTSANGNGLQVIPGMIVPPM.

The segment at 63 to 66 (RKSN) is interaction with DNA. Residues 151 to 170 (CRVLLTHEIMCSRCCDKKSC) form a C5-type zinc finger. 2 interaction with DNA regions span residues 197 to 204 (NCLKNAGN) and 236 to 239 (NNSK). In terms of domain architecture, IPT/TIG spans 262-344 (PCIKAISPSE…CKGTPGRFIY (83 aa)). The segment covering 454–466 (ANQGFSRNTSSVS) has biased composition (polar residues). Residues 454-484 (ANQGFSRNTSSVSPHGYVPSTTPQQSSYSTV) are disordered. Residues 471–484 (VPSTTPQQSSYSTV) are compositionally biased toward low complexity.

The protein belongs to the COE family. As to quaternary structure, forms either a homodimer or a heterodimer with a related family member. As to expression, detected in B cells.

It is found in the nucleus. Functionally, transcriptional activator. The chain is Transcription factor COE1-A from Danio rerio (Zebrafish).